The sequence spans 751 residues: MSNESKCPFHQTAGGGTTNRDWWPDQLNLRILHQHSSKSSPDPDFDYAKAFKSLDFQALKKDLTALMTDSQDWWPADFGHYGPLFIRMAWHSAGTYRIGDGRGGAGSGQQRFAPLNSWPDNVSLDKARRLLWPIKQKYGNKISWADLIVLTGNVALESMGFKTFGFSGGRADVWEPDEDVYWGSEKVWLGGDTRYGKDQLKAQAPGQGDLVAEPAKHGEEQNRDLSAERNLENPLAAVQMGLIYVNPEGPEGNPDPVASGKDIRETFGRMAMNDEETVALIAGGHAFGKTHGAGPADNVGPEPEAAGLELQGLGWANKFGTGKGGDAITSGLEVIWTSTPTKWSNEYLNNLFNFEWELTKSPAGAHQWRPKEGKGAGTVPDAHDPGKKHAPSMLTSDLALRFDPIYEPIARRFKDNPDQLADAFARAWYKLIHRDMGPLARYLGPEMPNEELLWQDPLPKADPSTIGEQDIAALKAKVLASGLSVGELVSTAWASASTFRGSDKRGGANGARLRLAPQKGWAANQGVDKVLAALEKIQGEFNNGGKKISLADLIVLAGTAAVEKAAKDAGYSGSVGFRPGRVDASEAQTDVESFAVLEPLADGFRNFSKARYSVKAEKLLLDKAQLLTLTAPELTVLVGGLRVLGANHGGSKLGVFTDKPGTLSNDFFRNLLDMSVEWKPTSADNETFEGRDRKTGQVKWSGSRVDLVFGSHAQLRALSEVYGSSDGADKFVRDFVAAWQKVMELDRFDLK.

The interval 1–21 (MSNESKCPFHQTAGGGTTNRD) is disordered. Positions 90 to 244 (WHSAGTYRIG…LAAVQMGLIY (155 aa)) form a cross-link, tryptophyl-tyrosyl-methioninium (Trp-Tyr) (with M-270). The active-site Proton acceptor is histidine 91. Residues 244–270 (YVNPEGPEGNPDPVASGKDIRETFGRM) constitute a cross-link (tryptophyl-tyrosyl-methioninium (Tyr-Met) (with W-90)). Residue histidine 285 coordinates heme b. Residues 365–390 (AHQWRPKEGKGAGTVPDAHDPGKKHA) form a disordered region.

The protein belongs to the peroxidase family. Peroxidase/catalase subfamily. In terms of assembly, homodimer or homotetramer. It depends on heme b as a cofactor. Formation of the three residue Trp-Tyr-Met cross-link is important for the catalase, but not the peroxidase activity of the enzyme.

It catalyses the reaction H2O2 + AH2 = A + 2 H2O. It carries out the reaction 2 H2O2 = O2 + 2 H2O. In terms of biological role, bifunctional enzyme with both catalase and broad-spectrum peroxidase activity. The polypeptide is Catalase-peroxidase (Pseudomonas putida (strain GB-1)).